The chain runs to 262 residues: Cytochrome c oxidase subunit 3 (262 aa).

6 helical membrane-spanning segments follow: residues 39–59 (YTMTLFILGNIITILTMYQWW), 83–103 (GMILFIVSEIFFFISFFWAFF), 120–140 (VGIIAFNPFQIPLLNTAILLA), 163–183 (GLFFTIVLGIYFSILQAYEYI), 201–221 (ATGFHGLHVLIGTTFLLICFL), and 240–260 (AWYWHFVDVVWLFLYISIYWW).

The protein belongs to the cytochrome c oxidase subunit 3 family. As to quaternary structure, component of the cytochrome c oxidase (complex IV, CIV), a multisubunit enzyme composed of a catalytic core of 3 subunits and several supernumerary subunits. The complex exists as a monomer or a dimer and forms supercomplexes (SCs) in the inner mitochondrial membrane with ubiquinol-cytochrome c oxidoreductase (cytochrome b-c1 complex, complex III, CIII).

Its subcellular location is the mitochondrion inner membrane. It catalyses the reaction 4 Fe(II)-[cytochrome c] + O2 + 8 H(+)(in) = 4 Fe(III)-[cytochrome c] + 2 H2O + 4 H(+)(out). In terms of biological role, component of the cytochrome c oxidase, the last enzyme in the mitochondrial electron transport chain which drives oxidative phosphorylation. The respiratory chain contains 3 multisubunit complexes succinate dehydrogenase (complex II, CII), ubiquinol-cytochrome c oxidoreductase (cytochrome b-c1 complex, complex III, CIII) and cytochrome c oxidase (complex IV, CIV), that cooperate to transfer electrons derived from NADH and succinate to molecular oxygen, creating an electrochemical gradient over the inner membrane that drives transmembrane transport and the ATP synthase. Cytochrome c oxidase is the component of the respiratory chain that catalyzes the reduction of oxygen to water. Electrons originating from reduced cytochrome c in the intermembrane space (IMS) are transferred via the dinuclear copper A center (CU(A)) of subunit 2 and heme A of subunit 1 to the active site in subunit 1, a binuclear center (BNC) formed by heme A3 and copper B (CU(B)). The BNC reduces molecular oxygen to 2 water molecules using 4 electrons from cytochrome c in the IMS and 4 protons from the mitochondrial matrix. This is Cytochrome c oxidase subunit 3 (COIII) from Anopheles quadrimaculatus (Common malaria mosquito).